The chain runs to 150 residues: 3-hydroxyacyl-[acyl-carrier-protein] dehydratase FabZ (150 aa).

Histidine 54 is an active-site residue.

The protein belongs to the thioester dehydratase family. FabZ subfamily.

It localises to the cytoplasm. It carries out the reaction a (3R)-hydroxyacyl-[ACP] = a (2E)-enoyl-[ACP] + H2O. Functionally, involved in unsaturated fatty acids biosynthesis. Catalyzes the dehydration of short chain beta-hydroxyacyl-ACPs and long chain saturated and unsaturated beta-hydroxyacyl-ACPs. In Psychromonas ingrahamii (strain DSM 17664 / CCUG 51855 / 37), this protein is 3-hydroxyacyl-[acyl-carrier-protein] dehydratase FabZ.